Here is a 192-residue protein sequence, read N- to C-terminus: Cell division protein SepF (192 aa).

The disordered stretch occupies residues 15–70 (GDPLEYEEDGEEYEQVYREENKREEARRATAGTAAAATPTAAAQASDAAPMGSGPA). A compositionally biased stretch (acidic residues) spans 18 to 28 (LEYEEDGEEYE). A compositionally biased stretch (basic and acidic residues) spans 29-42 (QVYREENKREEARR). Residues 43-63 (ATAGTAAAATPTAAAQASDAA) are compositionally biased toward low complexity.

The protein belongs to the SepF family. Homodimer. Interacts with FtsZ.

It localises to the cytoplasm. Its function is as follows. Cell division protein that is part of the divisome complex and is recruited early to the Z-ring. Probably stimulates Z-ring formation, perhaps through the cross-linking of FtsZ protofilaments. Its function overlaps with FtsA. This is Cell division protein SepF from Gloeobacter violaceus (strain ATCC 29082 / PCC 7421).